A 105-amino-acid chain; its full sequence is Large ribosomal subunit protein uL24 (105 aa).

The protein belongs to the universal ribosomal protein uL24 family. Part of the 50S ribosomal subunit.

One of two assembly initiator proteins, it binds directly to the 5'-end of the 23S rRNA, where it nucleates assembly of the 50S subunit. Its function is as follows. One of the proteins that surrounds the polypeptide exit tunnel on the outside of the subunit. This chain is Large ribosomal subunit protein uL24, found in Psychrobacter cryohalolentis (strain ATCC BAA-1226 / DSM 17306 / VKM B-2378 / K5).